The primary structure comprises 429 residues: GTPase Obg (429 aa).

The Obg domain occupies 1 to 158 (MFVDQVKIYV…RNVQLELKVL (158 aa)). A disordered region spans residues 124 to 145 (RGNKRFATPANPAPELSENGEP). The OBG-type G domain maps to 159–329 (ADVGLVGFPS…LLLAIADKLE (171 aa)). Residues 165–172 (GFPSVGKS), 190–194 (FTTIV), 212–215 (DLPG), 282–285 (NKMD), and 310–312 (SAV) contribute to the GTP site. Ser-172 and Thr-192 together coordinate Mg(2+). The region spanning 351 to 429 (KYVADEPDFE…LLDYEFEFMD (79 aa)) is the OCT domain.

This sequence belongs to the TRAFAC class OBG-HflX-like GTPase superfamily. OBG GTPase family. In terms of assembly, monomer. Mg(2+) serves as cofactor.

The protein resides in the cytoplasm. Its function is as follows. An essential GTPase which binds GTP, GDP and possibly (p)ppGpp with moderate affinity, with high nucleotide exchange rates and a fairly low GTP hydrolysis rate. Plays a role in control of the cell cycle, stress response, ribosome biogenesis and in those bacteria that undergo differentiation, in morphogenesis control. The polypeptide is GTPase Obg (Listeria monocytogenes serotype 4a (strain HCC23)).